The primary structure comprises 447 residues: N-succinylarginine dihydrolase (447 aa).

Substrate-binding positions include 19–28 (AGLSVGNKAS), Asn110, and 137–138 (HR). Residue Glu174 is part of the active site. Substrate is bound at residue Arg213. The active site involves His249. Asp251 and Asn365 together coordinate substrate. The active-site Nucleophile is the Cys371.

It belongs to the succinylarginine dihydrolase family. In terms of assembly, homodimer.

It carries out the reaction N(2)-succinyl-L-arginine + 2 H2O + 2 H(+) = N(2)-succinyl-L-ornithine + 2 NH4(+) + CO2. It participates in amino-acid degradation; L-arginine degradation via AST pathway; L-glutamate and succinate from L-arginine: step 2/5. Its function is as follows. Catalyzes the hydrolysis of N(2)-succinylarginine into N(2)-succinylornithine, ammonia and CO(2). The polypeptide is N-succinylarginine dihydrolase (Photorhabdus laumondii subsp. laumondii (strain DSM 15139 / CIP 105565 / TT01) (Photorhabdus luminescens subsp. laumondii)).